Reading from the N-terminus, the 623-residue chain is DNA-directed RNA polymerase subunit beta' (623 aa).

The Zn(2+) site is built by Cys70, Cys72, Cys85, and Cys88. The Mg(2+) site is built by Asp466, Asp468, and Asp470.

This sequence belongs to the RNA polymerase beta' chain family. RpoC1 subfamily. In plastids the minimal PEP RNA polymerase catalytic core is composed of four subunits: alpha, beta, beta', and beta''. When a (nuclear-encoded) sigma factor is associated with the core the holoenzyme is formed, which can initiate transcription. Mg(2+) serves as cofactor. It depends on Zn(2+) as a cofactor.

It localises to the plastid. The protein resides in the chloroplast. The catalysed reaction is RNA(n) + a ribonucleoside 5'-triphosphate = RNA(n+1) + diphosphate. Its function is as follows. DNA-dependent RNA polymerase catalyzes the transcription of DNA into RNA using the four ribonucleoside triphosphates as substrates. This chain is DNA-directed RNA polymerase subunit beta', found in Rhodomonas salina (Cryptomonas salina).